A 201-amino-acid polypeptide reads, in one-letter code: Dephospho-CoA kinase (201 aa).

In terms of domain architecture, DPCK spans 7–201; the sequence is AIALSGGIGT…IETIKKDFHV (195 aa). 15-20 serves as a coordination point for ATP; that stretch reads GTGKST.

The protein belongs to the CoaE family.

It is found in the cytoplasm. The enzyme catalyses 3'-dephospho-CoA + ATP = ADP + CoA + H(+). The protein operates within cofactor biosynthesis; coenzyme A biosynthesis; CoA from (R)-pantothenate: step 5/5. In terms of biological role, catalyzes the phosphorylation of the 3'-hydroxyl group of dephosphocoenzyme A to form coenzyme A. This is Dephospho-CoA kinase from Wolinella succinogenes (strain ATCC 29543 / DSM 1740 / CCUG 13145 / JCM 31913 / LMG 7466 / NCTC 11488 / FDC 602W) (Vibrio succinogenes).